The primary structure comprises 442 residues: Trigger factor (442 aa).

The PPIase FKBP-type domain occupies 165–250 (DDRVIIDFEG…LQKVMAPELP (86 aa)).

The protein belongs to the FKBP-type PPIase family. Tig subfamily.

It localises to the cytoplasm. It carries out the reaction [protein]-peptidylproline (omega=180) = [protein]-peptidylproline (omega=0). Involved in protein export. Acts as a chaperone by maintaining the newly synthesized protein in an open conformation. Functions as a peptidyl-prolyl cis-trans isomerase. The chain is Trigger factor from Coxiella burnetii (strain RSA 493 / Nine Mile phase I).